The sequence spans 694 residues: Elongation factor G (694 aa).

In terms of domain architecture, tr-type G spans 8 to 287 (EDYRNFGIMA…AVVEFLPAPT (280 aa)). Residues 17-24 (AHIDAGKT), 86-90 (DTPGH), and 140-143 (NKMD) contribute to the GTP site.

It belongs to the TRAFAC class translation factor GTPase superfamily. Classic translation factor GTPase family. EF-G/EF-2 subfamily.

Its subcellular location is the cytoplasm. In terms of biological role, catalyzes the GTP-dependent ribosomal translocation step during translation elongation. During this step, the ribosome changes from the pre-translocational (PRE) to the post-translocational (POST) state as the newly formed A-site-bound peptidyl-tRNA and P-site-bound deacylated tRNA move to the P and E sites, respectively. Catalyzes the coordinated movement of the two tRNA molecules, the mRNA and conformational changes in the ribosome. This chain is Elongation factor G, found in Brucella melitensis biotype 1 (strain ATCC 23456 / CCUG 17765 / NCTC 10094 / 16M).